The sequence spans 640 residues: MAPKPPSGTSLRAWDAVTPALSEWVLEAMSSMGFTRMTPVQASAIPLFMAHKDVVVEAVTGSGKTLSFLIPVVEKLLRLEEPIKKHHVGAIIISPTRELASQIYNVLSSLLAFHPPSAAAINPSEDDDAPRPKFPSSTLKVVPQLLLGGSTTPAEDLSTFLKRSPNVLVSTPGRLLELLSSPHVHCPQSSFEMLVLDEADRLLDLGFKETLQNILRRLPKQRRTGLFSASVSEAVDQIVRVGLRNPVKVMVKVKGGSGVDDKRTPASLQMTYLTTPPSHKFAALKRIVSSVQPTPLKTIFFVSTCSGVDYLSAILPLLLGDDFLLIPLHGKHQANVRQKNFNRFINSHDPAILLTTDVAARGLDIPSVDLVVQIDPPSDPKSFIHRCGRAGRAGRRGLSVVLLHPGREEDYVSFLEVRKTPVVPFSPSISFSDADAAAATATARKAVLADRALHDRGQKAFVSWLRSYSKHQASSIFRVSDLDWEALGKAWGLLKLPKMPELKNFTGDKTLGMSLDWDNYAYKDKQREKRRKELLQEAAESGATQSTSNKRRATESVAWSQQAESKNKKLKRREQKKSKQEKARWEKMTEEEKQKVLETEKMVEELRKKNEEERRLRRAVAKAAGAKADGDDEEEFQGFD.

The Q motif signature appears at 14-42 (WDAVTPALSEWVLEAMSSMGFTRMTPVQA). The Helicase ATP-binding domain occupies 45–249 (IPLFMAHKDV…RVGLRNPVKV (205 aa)). Residue 58 to 65 (AVTGSGKT) participates in ATP binding. The DEAD box motif lies at 197-200 (DEAD). Residues 283 to 437 (ALKRIVSSVQ…SISFSDADAA (155 aa)) enclose the Helicase C-terminal domain. Residues 521–629 (AYKDKQREKR…VAKAAGAKAD (109 aa)) are a coiled coil. 2 disordered regions span residues 531-593 (RKEL…EEEK) and 607-640 (RKKNEEERRLRRAVAKAAGAKADGDDEEEFQGFD). The segment covering 577–593 (KSKQEKARWEKMTEEEK) has biased composition (basic and acidic residues). The span at 630 to 640 (GDDEEEFQGFD) shows a compositional bias: acidic residues.

Belongs to the DEAD box helicase family. DDX55/SPB4 subfamily. In terms of assembly, component of pre-60S ribosomal complexes.

It localises to the nucleus. The protein localises to the nucleolus. The catalysed reaction is ATP + H2O = ADP + phosphate + H(+). Functionally, ATP-binding RNA helicase involved in the biogenesis of 60S ribosomal subunits. Binds 90S pre-ribosomal particles and dissociates from pre-60S ribosomal particles after processing of 27SB pre-rRNA. Required for the normal formation of 18S rRNA through the processing of pre-rRNAs at sites A0, A1 and A2, and the normal formation of 25S and 5.8S rRNAs through the processing of pre-rRNAs at sites C1 and C2. This Aspergillus fumigatus (strain ATCC MYA-4609 / CBS 101355 / FGSC A1100 / Af293) (Neosartorya fumigata) protein is ATP-dependent rRNA helicase spb4.